A 345-amino-acid polypeptide reads, in one-letter code: Biotin synthase (345 aa).

Residues 39–266 form the Radical SAM core domain; sequence NEVQVSTLLS…ASHVRLSAGR (228 aa). [4Fe-4S] cluster is bound by residues cysteine 54, cysteine 58, and cysteine 61. [2Fe-2S] cluster is bound by residues cysteine 98, cysteine 129, cysteine 189, and arginine 261.

This sequence belongs to the radical SAM superfamily. Biotin synthase family. As to quaternary structure, homodimer. [4Fe-4S] cluster serves as cofactor. The cofactor is [2Fe-2S] cluster.

The catalysed reaction is (4R,5S)-dethiobiotin + (sulfur carrier)-SH + 2 reduced [2Fe-2S]-[ferredoxin] + 2 S-adenosyl-L-methionine = (sulfur carrier)-H + biotin + 2 5'-deoxyadenosine + 2 L-methionine + 2 oxidized [2Fe-2S]-[ferredoxin]. It functions in the pathway cofactor biosynthesis; biotin biosynthesis; biotin from 7,8-diaminononanoate: step 2/2. Functionally, catalyzes the conversion of dethiobiotin (DTB) to biotin by the insertion of a sulfur atom into dethiobiotin via a radical-based mechanism. In Idiomarina loihiensis (strain ATCC BAA-735 / DSM 15497 / L2-TR), this protein is Biotin synthase.